Reading from the N-terminus, the 485-residue chain is Glutamate--tRNA ligase 1 (485 aa).

The 'HIGH' region motif lies at 9 to 19; sequence PSPTGHLHIGG. A 'KMSKS' region motif is present at residues 250–254; it reads KMSKR. Lys253 provides a ligand contact to ATP.

This sequence belongs to the class-I aminoacyl-tRNA synthetase family. Glutamate--tRNA ligase type 1 subfamily. As to quaternary structure, monomer.

It localises to the cytoplasm. It carries out the reaction tRNA(Glu) + L-glutamate + ATP = L-glutamyl-tRNA(Glu) + AMP + diphosphate. Functionally, catalyzes the attachment of glutamate to tRNA(Glu) in a two-step reaction: glutamate is first activated by ATP to form Glu-AMP and then transferred to the acceptor end of tRNA(Glu). This Caldicellulosiruptor saccharolyticus (strain ATCC 43494 / DSM 8903 / Tp8T 6331) protein is Glutamate--tRNA ligase 1.